Here is a 209-residue protein sequence, read N- to C-terminus: Rac-like GTP-binding protein ARAC7 (209 aa).

A GTP-binding site is contributed by 13 to 20 (GDGAVGKT). Positions 35 to 43 (YIPTVFDNF) match the Effector region motif. GTP contacts are provided by residues 60–64 (DTAGQ) and 118–121 (TKLD). S-palmitoyl cysteine attachment occurs at residues cysteine 196, cysteine 203, and cysteine 206.

It belongs to the small GTPase superfamily. Rho family. Although this sequence has a C-terminal -CXXX, it is palmitoylated at Cys-206, rather than prenylated.

The protein localises to the membrane. In terms of biological role, acts as a negative regulator of abscisic acid (ABA) responses. This is Rac-like GTP-binding protein ARAC7 (ARAC7) from Arabidopsis thaliana (Mouse-ear cress).